Here is a 343-residue protein sequence, read N- to C-terminus: Phosphate acyltransferase (343 aa).

It belongs to the PlsX family. In terms of assembly, homodimer. Probably interacts with PlsY.

The protein localises to the cytoplasm. It carries out the reaction a fatty acyl-[ACP] + phosphate = an acyl phosphate + holo-[ACP]. Its pathway is lipid metabolism; phospholipid metabolism. Functionally, catalyzes the reversible formation of acyl-phosphate (acyl-PO(4)) from acyl-[acyl-carrier-protein] (acyl-ACP). This enzyme utilizes acyl-ACP as fatty acyl donor, but not acyl-CoA. The sequence is that of Phosphate acyltransferase from Halorhodospira halophila (strain DSM 244 / SL1) (Ectothiorhodospira halophila (strain DSM 244 / SL1)).